Reading from the N-terminus, the 276-residue chain is Type II pantothenate kinase (276 aa).

8–15 (DAGGTLTK) is a binding site for ATP. Residue Glu-76 is the Proton acceptor of the active site. Residues Thr-105, 127 to 131 (GGTIM), Phe-143, and Ser-230 each bind ATP.

The protein belongs to the type II pantothenate kinase family. In terms of assembly, homodimer.

It is found in the cytoplasm. The enzyme catalyses (R)-pantothenate + ATP = (R)-4'-phosphopantothenate + ADP + H(+). Its pathway is cofactor biosynthesis; coenzyme A biosynthesis; CoA from (R)-pantothenate: step 1/5. Functionally, catalyzes the phosphorylation of pantothenate (Pan), the first step in CoA biosynthesis. The sequence is that of Type II pantothenate kinase from Bacillus cereus (strain ATCC 10987 / NRS 248).